The chain runs to 321 residues: Tetraacyldisaccharide 4'-kinase (321 aa).

54–61 (SVGGTGKT) serves as a coordination point for ATP.

It belongs to the LpxK family.

The catalysed reaction is a lipid A disaccharide + ATP = a lipid IVA + ADP + H(+). Its pathway is glycolipid biosynthesis; lipid IV(A) biosynthesis; lipid IV(A) from (3R)-3-hydroxytetradecanoyl-[acyl-carrier-protein] and UDP-N-acetyl-alpha-D-glucosamine: step 6/6. Its function is as follows. Transfers the gamma-phosphate of ATP to the 4'-position of a tetraacyldisaccharide 1-phosphate intermediate (termed DS-1-P) to form tetraacyldisaccharide 1,4'-bis-phosphate (lipid IVA). This chain is Tetraacyldisaccharide 4'-kinase, found in Rickettsia rickettsii.